We begin with the raw amino-acid sequence, 541 residues long: Methyl-accepting chemotaxis protein PcaY (541 aa).

The Cytoplasmic segment spans residues 1-10; it reads MLANLKIRTG. A helical membrane pass occupies residues 11-31; sequence MFWVLSLFSLTLLFSTASAWW. Over 32–189 the chain is Periplasmic; the sequence is AAVGSDQQIT…ESDRRLARAQ (158 aa). Positions 35–187 are ligand-binding domain; that stretch reads GSDQQITELD…MLESDRRLAR (153 aa). The helical transmembrane segment at 190 to 210 threads the bilayer; that stretch reads LLSLCLLGMTVVLAVLCWAFI. At 211–541 the chain is on the cytoplasmic side; the sequence is AQRVLHPLRE…MTALVGRFKV (331 aa). The HAMP domain maps to 212 to 264; it reads QRVLHPLREAGGHFRRIASGDLSVPVQGQGNNEIGQLFHELQRMQQSQRDTLG. Positions 269–505 constitute a Methyl-accepting transducer domain; that stretch reads CARQLDAAAS…EVDRNLLNIR (237 aa). Residues 322 to 341 form a disordered region; that stretch reads TSQTTSESNQLAAQSRRQVS.

The protein belongs to the methyl-accepting chemotaxis (MCP) protein family.

Its subcellular location is the cell inner membrane. Chemotactic-signal transducers respond to changes in the concentration of attractants and repellents in the environment, transduce a signal from the outside to the inside of the cell, and facilitate sensory adaptation through the variation of the level of methylation. PcaY is responsible for the detection of multiple aromatic and hydroaromatic compounds that are metabolized through the beta-ketoadipate catabolic pathway, including vanillin, vanillate, 4-hydroxybenzoate (4-HBA), benzoate and protocatechuate. It also senses several nonmetabolizable aromatic compounds. In Pseudomonas putida (strain ATCC 700007 / DSM 6899 / JCM 31910 / BCRC 17059 / LMG 24140 / F1), this protein is Methyl-accepting chemotaxis protein PcaY.